The following is a 251-amino-acid chain: Hydroxyacylglutathione hydrolase (251 aa).

Zn(2+) is bound by residues H53, H55, D57, H58, H110, D127, and H165.

The protein belongs to the metallo-beta-lactamase superfamily. Glyoxalase II family. As to quaternary structure, monomer. Zn(2+) is required as a cofactor.

The catalysed reaction is an S-(2-hydroxyacyl)glutathione + H2O = a 2-hydroxy carboxylate + glutathione + H(+). It functions in the pathway secondary metabolite metabolism; methylglyoxal degradation; (R)-lactate from methylglyoxal: step 2/2. Functionally, thiolesterase that catalyzes the hydrolysis of S-D-lactoyl-glutathione to form glutathione and D-lactic acid. The polypeptide is Hydroxyacylglutathione hydrolase (Escherichia coli O6:H1 (strain CFT073 / ATCC 700928 / UPEC)).